The primary structure comprises 424 residues: Glutamate-1-semialdehyde 2,1-aminomutase (424 aa).

At K260 the chain carries N6-(pyridoxal phosphate)lysine.

Belongs to the class-III pyridoxal-phosphate-dependent aminotransferase family. HemL subfamily. Pyridoxal 5'-phosphate serves as cofactor.

The protein resides in the cytoplasm. It carries out the reaction (S)-4-amino-5-oxopentanoate = 5-aminolevulinate. It participates in porphyrin-containing compound metabolism; protoporphyrin-IX biosynthesis; 5-aminolevulinate from L-glutamyl-tRNA(Glu): step 2/2. In Nitrosopumilus maritimus (strain SCM1), this protein is Glutamate-1-semialdehyde 2,1-aminomutase.